A 480-amino-acid polypeptide reads, in one-letter code: Proline--tRNA ligase (480 aa).

The protein belongs to the class-II aminoacyl-tRNA synthetase family. ProS type 3 subfamily. As to quaternary structure, homodimer.

The protein localises to the cytoplasm. It catalyses the reaction tRNA(Pro) + L-proline + ATP = L-prolyl-tRNA(Pro) + AMP + diphosphate. Its function is as follows. Catalyzes the attachment of proline to tRNA(Pro) in a two-step reaction: proline is first activated by ATP to form Pro-AMP and then transferred to the acceptor end of tRNA(Pro). This chain is Proline--tRNA ligase, found in Pyrococcus abyssi (strain GE5 / Orsay).